The primary structure comprises 92 residues: Large ribosomal subunit protein bL27 (92 aa).

Residues 1–8 (MLMNLQFF) constitute a propeptide that is removed on maturation. The disordered stretch occupies residues 11–30 (HKGGGSTANGRDSAGRRLGA).

This sequence belongs to the bacterial ribosomal protein bL27 family. The N-terminus is cleaved by ribosomal processing cysteine protease Prp.

The chain is Large ribosomal subunit protein bL27 from Lactiplantibacillus plantarum (strain ATCC BAA-793 / NCIMB 8826 / WCFS1) (Lactobacillus plantarum).